A 205-amino-acid chain; its full sequence is Nascent polypeptide-associated complex subunit alpha-like protein (205 aa).

Disordered regions lie at residues 1–73 (MPSV…RKAM) and 137–166 (KAPN…DTGV). The segment covering 20-29 (EQQELEHSDE) has biased composition (basic and acidic residues). Residues 30–51 (PILEDDEDDDDEEDDNDEDDAQ) are compositionally biased toward acidic residues. Residues 56–66 (GEGKSKQSRSE) are compositionally biased toward basic and acidic residues. The NAC-A/B domain occupies 63–128 (SRSEKKCRKA…AKIEDLSSQL (66 aa)). A compositionally biased stretch (acidic residues) spans 155–165 (QEDEDEVDDTG). In terms of domain architecture, UBA spans 166–203 (VEPKDIELVMTQAGVSRTKAVKALKAADGDIVSAIMDL).

It belongs to the NAC-alpha family.

Its function is as follows. May promote appropriate targeting of ribosome-nascent polypeptide complexes. The chain is Nascent polypeptide-associated complex subunit alpha-like protein from Pinus taeda (Loblolly pine).